Reading from the N-terminus, the 379-residue chain is MAEILMGVGNAGLKESGNPDILVVYLPYPCTASFVFTDNYFKAGSVIYSERIARDKERIRAFVVNSGNANCGTGEEGIKHAEMMAEKVAQILDIPKDEVFVFSTGIIGKYLPIENVLKGIEQACSNLELLDLKRASEVISTTDRFPKYDFAKAGEVETFGFAKGAGMIHPSMATMLAFVFTNANLEYLTLKRIHESVTEKTFNSITVDGCESTNDAFGIISLGEVEADPETVEFELLKVSESLAKQIVADGEGATKIIRVNVRSAITEIKAREIAEAIANSLLVKTAVFGRDPNWGRIAAAAGSTEFPIDPFKLEIYVGGYLLYDGKPHDENLEKAKKHLIEDREVDITVELNEGEYEWVCYSSDIGYDYIKLNAEYTT.

Residues Thr141, Lys163, Thr174, Glu252, Asn374, and Thr379 each contribute to the substrate site. The active-site Nucleophile is Thr174.

Belongs to the ArgJ family. Heterotetramer of two alpha and two beta chains.

Its subcellular location is the cytoplasm. It catalyses the reaction N(2)-acetyl-L-ornithine + L-glutamate = N-acetyl-L-glutamate + L-ornithine. The enzyme catalyses L-glutamate + acetyl-CoA = N-acetyl-L-glutamate + CoA + H(+). Its pathway is amino-acid biosynthesis; L-arginine biosynthesis; L-ornithine and N-acetyl-L-glutamate from L-glutamate and N(2)-acetyl-L-ornithine (cyclic): step 1/1. The protein operates within amino-acid biosynthesis; L-arginine biosynthesis; N(2)-acetyl-L-ornithine from L-glutamate: step 1/4. In terms of biological role, catalyzes two activities which are involved in the cyclic version of arginine biosynthesis: the synthesis of N-acetylglutamate from glutamate and acetyl-CoA as the acetyl donor, and of ornithine by transacetylation between N(2)-acetylornithine and glutamate. In Aquifex aeolicus (strain VF5), this protein is Arginine biosynthesis bifunctional protein ArgJ.